Consider the following 673-residue polypeptide: MAKIAQGAMYRGSVHDFPEFDANQDAEALYTAMKGFGSDKESILELITSRSNKQRQEICQNYKSLYGKDLIEDLKYELTGKFERLIVNLMRPLAYCDAKEIKDAISGVGTDEKCLIEILASRTNEQMHQLVAAYKDAYERDLESDIIGDTSGHFQKMLVVLLQGTRENDDVVSEDLVQQDVQDLYEAGELKWGTDEAQFIYILGNRSKQHLRLVFDEYLKTTGKPIEASIRGELSGDFEKLMLAVVKCIRSTPEYFAERLFKAMKGLGTRDNTLIRIMVSRSELDMLDIREIFRTKYEKSLYSMIKNDTSGEYKKALLKLCGGDDDAAGQFFPEAAQVAYQMWELSAVSRVELKGTVCAANDFNPDADAKALRKAMKGIGTDEATIIDIVTHRSNAQRQQIRQTFKSHFGRDLMADLKSEISGDLARLILGLMMPPAHYDAKQLKKAMEGAGTDEKTLIEILATRTNAEIRAINEAYKEDYHKSLEDALSSDTSGHFRRILISLATGNREEGGENRDQAQEDAQVAAEILEIADTPSGDKTSLETRFMTVLCTRSYPHLRRVFQEFIKKTNYDIEHVIKKEMSGDVKDAFVAIVQSVKNKPLFFADKLYKSMKGAGTDEKTLTRVMVSRSEIDLLNIRREFIEKYDKSLHQAIEGDTSGDFMKALLALCGGED.

Residue Ala-2 is modified to N-acetylalanine. Ser-13 is modified (phosphoserine). Annexin repeat units lie at residues 20 to 91 (FDAN…NLMR), 92 to 163 (PLAY…VLLQ), 175 to 247 (DLVQ…AVVK), 251 to 322 (STPE…KLCG), 363 to 434 (FNPD…GLMM), 435 to 506 (PPAH…SLAT), 521 to 595 (EDAQ…AIVQ), and 599 to 670 (NKPL…ALCG). Tyr-30 carries the phosphotyrosine modification. N6-acetyllysine occurs at positions 63, 68, 75, and 81. Tyr-201 bears the Phosphotyrosine mark. N6-acetyllysine is present on residues Lys-306, Lys-370, and Lys-418. Residue Ser-422 is modified to Phosphoserine. The residue at position 483 (Lys-483) is an N6-acetyllysine. Residue Ser-537 is modified to Phosphoserine. Position 620 is an N6-acetyllysine (Lys-620).

Belongs to the annexin family.

The protein localises to the cytoplasm. The protein resides in the melanosome. In terms of biological role, may associate with CD21. May regulate the release of Ca(2+) from intracellular stores. The protein is Annexin A6 (Anxa6) of Mus musculus (Mouse).